The following is a 360-amino-acid chain: Olfactory receptor 1L1 (360 aa).

Over 1 to 75 (MERNHNPDNC…GLSSRPEDQK (75 aa)) the chain is Extracellular. N-linked (GlcNAc...) asparagine glycosylation occurs at asparagine 55. A helical transmembrane segment spans residues 76-99 (PLFAVFLPIYLITVIGNLLIILAI). Residues 100-107 (RSDTRLQT) lie on the Cytoplasmic side of the membrane. A helical transmembrane segment spans residues 108-129 (PMYFFLSILSFVDICYVTVIIP). The Extracellular segment spans residues 130–150 (KMLVNFLSETKTISYSECLTQ). A disulfide bridge connects residues cysteine 147 and cysteine 239. A helical membrane pass occupies residues 151-170 (MYFFLAFGNTDSYLLAAMAI). Over 171–189 (DRYVAICNPFHYITIMSHR) the chain is Cytoplasmic. A helical transmembrane segment spans residues 190-208 (CCVLLLVLSFCIPHFHSLL). Over 209–246 (HILLTNQLIFCASNVIHHFFCDDQPVLKLSCSSHFVKE) the chain is Extracellular. The helical transmembrane segment at 247–269 (ITVMTEGLAVIMTPFSCIIISYL) threads the bilayer. The Cytoplasmic portion of the chain corresponds to 270 to 286 (RILITVLKIPSAAGKRK). A helical transmembrane segment spans residues 287–309 (AFSTCGSHLTVVTLFYGSISYLY). At 310–321 (FQPLSNYTVKDQ) the chain is on the extracellular side. Residue asparagine 315 is glycosylated (N-linked (GlcNAc...) asparagine). Residues 322–341 (IATIIYTVLTPMLNPFIYSL) form a helical membrane-spanning segment. Over 342–360 (RNKDMKQGLAKLMHRMKCQ) the chain is Cytoplasmic.

It belongs to the G-protein coupled receptor 1 family.

The protein resides in the cell membrane. In terms of biological role, odorant receptor. The sequence is that of Olfactory receptor 1L1 (OR1L1) from Homo sapiens (Human).